Reading from the N-terminus, the 412-residue chain is Putative competence-damage inducible protein (412 aa).

Belongs to the CinA family.

The sequence is that of Putative competence-damage inducible protein from Bacillus cereus (strain AH187).